The chain runs to 438 residues: Adenosylhomocysteinase (438 aa).

3 residues coordinate substrate: Thr-64, Asp-139, and Glu-164. Thr-165–Thr-167 is an NAD(+) binding site. Substrate contacts are provided by Lys-194 and Asp-198. NAD(+) is bound by residues Asn-199, Gly-228–Gly-233, Glu-251, Asn-286, Ile-307–His-309, and Asn-352.

The protein belongs to the adenosylhomocysteinase family. Requires NAD(+) as cofactor.

It is found in the cytoplasm. It catalyses the reaction S-adenosyl-L-homocysteine + H2O = L-homocysteine + adenosine. It functions in the pathway amino-acid biosynthesis; L-homocysteine biosynthesis; L-homocysteine from S-adenosyl-L-homocysteine: step 1/1. In terms of biological role, may play a key role in the regulation of the intracellular concentration of adenosylhomocysteine. In Coxiella burnetii (strain Dugway 5J108-111), this protein is Adenosylhomocysteinase.